The sequence spans 1549 residues: Trichohyalin (1549 aa).

Residues 1–91 are S-100-like; that stretch reads MSPLLRSIFN…AAACYYALGQ (91 aa). EF-hand domains follow at residues 23-48 and 49-84; these read CDGT…LRKP and HDPE…VAAA. 6 residues coordinate Ca(2+): Thr27, Asp32, Asp62, Asp64, Asp66, and Glu73. Disordered stretches follow at residues 97 to 125, 157 to 180, 262 to 359, and 404 to 448; these read EKEA…PQDR, LQRR…GREL, LRRK…KQEQ, and QREK…RQER. Composition is skewed to basic and acidic residues over residues 171 to 180, 262 to 278, and 317 to 335; these read LQQRPKGREL, LRRK…RQEQ, and HRQE…ERQQ. The segment covering 336 to 348 has biased composition (low complexity); the sequence is EQQISEEVQSLQE. The span at 349–359 shows a compositional bias: basic and acidic residues; sequence DQGRQRLKQEQ. 14 consecutive repeat copies span residues 413–448, 449–476, 477–504, 505–532, 533–560, 561–588, 589–616, 617–644, 645–678, 679–706, 707–742, 743–771, 772–796, and 797–832. The tract at residues 413 to 832 is 14 X 28 AA approximate tandem repeats; it reads ERQYREVELQ…ECEKRRRQEL (420 aa). Disordered stretches follow at residues 782–803, 839–942, and 980–1000; these read REEE…YREE, EELQ…RKFR, and QLRQ…ERDR. 3 stretches are compositionally biased toward basic and acidic residues: residues 850–884, 895–918, and 925–942; these read FRDD…DSWV, PLQD…KRDS, and LLER…RKFR. 23 consecutive repeat copies span residues 938–961, 962–985, 986–1021, 1022–1044, 1045–1067, 1068–1090, 1091–1121, 1122–1144, 1145–1167, 1168–1197, 1198–1227, 1228–1250, 1251–1273, 1274–1296, 1297–1319, 1320–1342, 1343–1368, 1369–1391, 1392–1416, 1417–1439, 1440–1461, 1462–1484, and 1485–1507. Residues 938–1507 form a 23 X 23 AA approximate tandem repeats region; it reads DRKFREEEQL…ERDVQQSRRQ (570 aa). The span at 1489 to 1523 shows a compositional bias: basic and acidic residues; it reads QQEEQKRRQERDVQQSRRQVWEEDKGRRQVLEAGK. A disordered region spans residues 1489 to 1549; sequence QQEEQKRRQE…IQEQRSQYRP (61 aa).

The protein belongs to the S100-fused protein family. Homodimer. In terms of processing, substrate of transglutaminase. Some 200 arginines are probably converted to citrullines by peptidylarginine deimidase. As to expression, found in the hard keratinizing tissues such as the inner root sheath (IRS) of hair follicles and medulla, and in the epithelia of the tongue, hoof and rumen.

Functionally, intermediate filament-associated protein that associates in regular arrays with keratin intermediate filaments (KIF) of the inner root sheath cells of the hair follicle and the granular layer of the epidermis. It later becomes cross-linked to KIF by isodipeptide bonds. It may serve as scaffold protein, together with involucrin, in the organization of the cell envelope or even anchor the cell envelope to the KIF network. It may be involved in its own calcium-dependent postsynthetic processing during terminal differentiation. This is Trichohyalin (TCHH) from Ovis aries (Sheep).